Reading from the N-terminus, the 756-residue chain is Inactive carboxypeptidase-like protein X2 (756 aa).

A signal peptide spans 1–25; the sequence is MSRPGTATPALALVLLAVTLAGVGA. The interval 51–131 is disordered; sequence EPELETFSPP…DHSVRVARED (81 aa). Residues 68–78 show a composition bias toward basic and acidic residues; it reads EWERRPQEPRP. The segment covering 79 to 90 has biased composition (basic residues); it reads PKRATKPKKAPK. Over residues 113 to 131 the composition is skewed to basic and acidic residues; the sequence is KSSEKAANDDHSVRVARED. The 160-residue stretch at 134-293 folds into the F5/8 type C domain; the sequence is ESCPPLGLET…ICMRMEILGC (160 aa). Cys-136 and Cys-293 are oxidised to a cystine. 5 N-linked (GlcNAc...) asparagine glycosylation sites follow: Asn-231, Asn-241, Asn-281, Asn-337, and Asn-491. The region spanning 317 to 640 is the Peptidase M14 domain; the sequence is KHHNYKEMRQ…ESLIVFMEQV (324 aa).

The protein belongs to the peptidase M14 family.

It localises to the secreted. May be involved in cell-cell interactions. The chain is Inactive carboxypeptidase-like protein X2 (CPXM2) from Homo sapiens (Human).